A 180-amino-acid polypeptide reads, in one-letter code: MIDLKEVKERMGKVSKAFQNELINIRAGRANPNILNKIQVEYYGAPTPLNQLASVQIPEARVLLITPYDKTSLKAIEQAIFASDLGLTPQNDGSAIRLIIPQLTEDSRKELVKQVKAEAEKAKVAARNTRHDFMSDLKKDNDLSEDSRHRTEDDIQKATDLEIKDIDRIADIKEKELMEI.

Residues 135 to 156 (SDLKKDNDLSEDSRHRTEDDIQ) form a disordered region.

It belongs to the RRF family.

The protein localises to the cytoplasm. Functionally, responsible for the release of ribosomes from messenger RNA at the termination of protein biosynthesis. May increase the efficiency of translation by recycling ribosomes from one round of translation to another. This chain is Ribosome-recycling factor, found in Oenococcus oeni (strain ATCC BAA-331 / PSU-1).